The sequence spans 1486 residues: Phosphatidylinositol 3-kinase C2 domain-containing subunit gamma (1486 aa).

Residues 285-371 enclose the PI3K-RBD domain; it reads KTKFNIHIFI…IQLHLQKSRE (87 aa). The C2 PI3K-type domain occupies 521–669; the sequence is LPSHLSFTVY…SPVTLQIDFP (149 aa). Residues 684–860 enclose the PIK helical domain; sequence RSNLEEPLKE…QKLLAALQFC (177 aa). Residues 929-1207 form the PI3K/PI4K catalytic domain; that stretch reads DHDACSYFTS…KIKESLECFP (279 aa). The segment at 935 to 941 is G-loop; the sequence is YFTSNAL. The segment at 1071–1079 is catalytic loop; it reads GVCDRHNDN. The interval 1090-1116 is activation loop; that stretch reads HIDFGKFLGHAQTFGGIKRDRAPFIFT. Residues 1240 to 1352 enclose the PX domain; that stretch reads LSTTRSIERA…SFFLSEAVQQ (113 aa). Residues 1369-1486 enclose the C2 domain; sequence KKPKVQLVIS…KWYPLGNSII (118 aa).

Belongs to the PI3/PI4-kinase family. In terms of tissue distribution, highly expressed in liver, prostate and testis. Lower levels in small intestine, kidney and pancreas.

Its subcellular location is the membrane. The catalysed reaction is a 1,2-diacyl-sn-glycero-3-phospho-(1D-myo-inositol 4-phosphate) + ATP = a 1,2-diacyl-sn-glycero-3-phospho-(1D-myo-inositol-3,4-bisphosphate) + ADP + H(+). It carries out the reaction a 1,2-diacyl-sn-glycero-3-phospho-(1D-myo-inositol) + ATP = a 1,2-diacyl-sn-glycero-3-phospho-(1D-myo-inositol-3-phosphate) + ADP + H(+). In terms of biological role, generates phosphatidylinositol 3-phosphate (PtdIns3P) and phosphatidylinositol 3,4-bisphosphate (PtdIns(3,4)P2) that act as second messengers. May play a role in SDF1A-stimulated chemotaxis. The sequence is that of Phosphatidylinositol 3-kinase C2 domain-containing subunit gamma (PIK3C2G) from Homo sapiens (Human).